The following is a 508-amino-acid chain: Aspartyl/glutamyl-tRNA(Asn/Gln) amidotransferase subunit B (508 aa).

The protein belongs to the GatB/GatE family. GatB subfamily. As to quaternary structure, heterotrimer of A, B and C subunits.

It carries out the reaction L-glutamyl-tRNA(Gln) + L-glutamine + ATP + H2O = L-glutaminyl-tRNA(Gln) + L-glutamate + ADP + phosphate + H(+). It catalyses the reaction L-aspartyl-tRNA(Asn) + L-glutamine + ATP + H2O = L-asparaginyl-tRNA(Asn) + L-glutamate + ADP + phosphate + 2 H(+). Allows the formation of correctly charged Asn-tRNA(Asn) or Gln-tRNA(Gln) through the transamidation of misacylated Asp-tRNA(Asn) or Glu-tRNA(Gln) in organisms which lack either or both of asparaginyl-tRNA or glutaminyl-tRNA synthetases. The reaction takes place in the presence of glutamine and ATP through an activated phospho-Asp-tRNA(Asn) or phospho-Glu-tRNA(Gln). This Salinibacter ruber (strain DSM 13855 / M31) protein is Aspartyl/glutamyl-tRNA(Asn/Gln) amidotransferase subunit B.